The sequence spans 43 residues: Iota-conotoxin-like Fi11.6 (43 aa).

4 disulfides stabilise this stretch: C2/C16, C9/C19, C15/C24, and C18/C35. P8 bears the 4-hydroxyproline mark. P26 carries the 4-hydroxyproline modification. A 6'-bromotryptophan modification is found at W30. Position 41 is a D-phenylalanine (F41).

This sequence belongs to the conotoxin I1 superfamily. As to expression, expressed by the venom duct.

The protein localises to the secreted. Functionally, iota-conotoxins bind to voltage-gated sodium channels (Nav) and act as agonists by shifting the voltage-dependence of activation to more hyperpolarized levels. Produces general excitatory symptoms. The polypeptide is Iota-conotoxin-like Fi11.6 (Conus figulinus (Fig cone)).